The primary structure comprises 356 residues: Homoserine O-acetyltransferase (356 aa).

One can recognise an AB hydrolase-1 domain in the interval 50–335; the sequence is NVILVCHALT…DEPYGHDAFL (286 aa). The active-site Nucleophile is the Ser-146. A substrate-binding site is contributed by Arg-215. Active-site residues include Asp-302 and His-331. Asp-332 contacts substrate.

This sequence belongs to the AB hydrolase superfamily. MetX family. In terms of assembly, homodimer.

It is found in the cytoplasm. It catalyses the reaction L-homoserine + acetyl-CoA = O-acetyl-L-homoserine + CoA. It participates in amino-acid biosynthesis; L-methionine biosynthesis via de novo pathway; O-acetyl-L-homoserine from L-homoserine: step 1/1. Its function is as follows. Transfers an acetyl group from acetyl-CoA to L-homoserine, forming acetyl-L-homoserine. This is Homoserine O-acetyltransferase from Chlorobaculum parvum (strain DSM 263 / NCIMB 8327) (Chlorobium vibrioforme subsp. thiosulfatophilum).